We begin with the raw amino-acid sequence, 213 residues long: Probable lipid phosphate phosphatase beta (213 aa).

A run of 5 helical transmembrane segments spans residues 30–50, 67–87, 118–138, 158–178, and 181–201; these read PFLP…RFSF, VPFL…KLIF, VFFV…SMTG, VEVV…RILL, and HYVL…LFAL.

Belongs to the PA-phosphatase related phosphoesterase family.

It is found in the membrane. This Arabidopsis thaliana (Mouse-ear cress) protein is Probable lipid phosphate phosphatase beta (LPPB).